The sequence spans 432 residues: Uracil permease (432 aa).

12 helical membrane passes run leucine 25–isoleucine 45, valine 65–alanine 85, glycine 89–isoleucine 109, valine 124–methionine 144, leucine 155–alanine 175, leucine 181–valine 201, valine 206–valine 226, valine 228–isoleucine 248, valine 305–glycine 325, leucine 330–isoleucine 350, asparagine 370–serine 390, and phenylalanine 393–proline 413.

The protein belongs to the nucleobase:cation symporter-2 (NCS2) (TC 2.A.40) family.

The protein resides in the cell membrane. Its function is as follows. Transport of uracil in the cell. The protein is Uracil permease (pyrP) of Bacillus caldolyticus.